We begin with the raw amino-acid sequence, 44 residues long: Photosystem I reaction center subunit IX (44 aa).

Residues 7–27 form a helical membrane-spanning segment; that stretch reads YLSVAPVLSTLSLGFLTGFLI.

This sequence belongs to the PsaJ family.

It is found in the plastid membrane. In terms of biological role, may help in the organization of the PsaE and PsaF subunits. The protein is Photosystem I reaction center subunit IX of Cuscuta gronovii (Common dodder).